Reading from the N-terminus, the 346-residue chain is N-acetyl-gamma-glutamyl-phosphate reductase (346 aa).

Residue Cys-150 is part of the active site.

Belongs to the NAGSA dehydrogenase family. Type 1 subfamily.

It is found in the cytoplasm. The enzyme catalyses N-acetyl-L-glutamate 5-semialdehyde + phosphate + NADP(+) = N-acetyl-L-glutamyl 5-phosphate + NADPH + H(+). Its pathway is amino-acid biosynthesis; L-arginine biosynthesis; N(2)-acetyl-L-ornithine from L-glutamate: step 3/4. In terms of biological role, catalyzes the NADPH-dependent reduction of N-acetyl-5-glutamyl phosphate to yield N-acetyl-L-glutamate 5-semialdehyde. This is N-acetyl-gamma-glutamyl-phosphate reductase from Desulforamulus reducens (strain ATCC BAA-1160 / DSM 100696 / MI-1) (Desulfotomaculum reducens).